A 323-amino-acid chain; its full sequence is Beta-ketoacyl-[acyl-carrier-protein] synthase III (323 aa).

Residues Cys-113 and His-250 contribute to the active site. Residues 251-255 (QANKR) are ACP-binding. Asn-280 is an active-site residue.

The protein belongs to the thiolase-like superfamily. FabH family. Homodimer.

It localises to the cytoplasm. It carries out the reaction malonyl-[ACP] + acetyl-CoA + H(+) = 3-oxobutanoyl-[ACP] + CO2 + CoA. Its pathway is lipid metabolism; fatty acid biosynthesis. Catalyzes the condensation reaction of fatty acid synthesis by the addition to an acyl acceptor of two carbons from malonyl-ACP. Catalyzes the first condensation reaction which initiates fatty acid synthesis and may therefore play a role in governing the total rate of fatty acid production. Possesses both acetoacetyl-ACP synthase and acetyl transacylase activities. Its substrate specificity determines the biosynthesis of branched-chain and/or straight-chain of fatty acids. The protein is Beta-ketoacyl-[acyl-carrier-protein] synthase III of Agrobacterium fabrum (strain C58 / ATCC 33970) (Agrobacterium tumefaciens (strain C58)).